A 198-amino-acid chain; its full sequence is Segregation and condensation protein B (198 aa).

The tract at residues 168 to 198 is disordered; sequence KLADPATDEPDQNEMDLFFDRFNQSKEQEEE.

The protein belongs to the ScpB family. As to quaternary structure, homodimer. Homodimerization may be required to stabilize the binding of ScpA to the Smc head domains. Component of a cohesin-like complex composed of ScpA, ScpB and the Smc homodimer, in which ScpA and ScpB bind to the head domain of Smc. The presence of the three proteins is required for the association of the complex with DNA.

It localises to the cytoplasm. Its function is as follows. Participates in chromosomal partition during cell division. May act via the formation of a condensin-like complex containing Smc and ScpA that pull DNA away from mid-cell into both cell halves. In Listeria monocytogenes serotype 4b (strain CLIP80459), this protein is Segregation and condensation protein B.